A 185-amino-acid chain; its full sequence is Prorelaxin H1 (185 aa).

The first 22 residues, Met1–Ala22, serve as a signal peptide directing secretion. Cystine bridges form between Cys35/Cys172, Cys47/Cys185, and Cys171/Cys176. Positions Ser56 to Gln158 are cleaved as a propeptide — connecting peptide.

The protein belongs to the insulin family. As to quaternary structure, heterodimer of a B chain and an A chain linked by two disulfide bonds. Prostate. Not expressed in placenta, decidua or ovary.

The protein localises to the secreted. Relaxin is an ovarian hormone that acts with estrogen to produce dilatation of the birth canal in many mammals. May be involved in remodeling of connective tissues during pregnancy, promoting growth of pubic ligaments and ripening of the cervix. In Homo sapiens (Human), this protein is Prorelaxin H1 (RLN1).